The chain runs to 786 residues: Pentatricopeptide repeat-containing protein At2g22070 (786 aa).

16 PPR repeats span residues 48–78, 79–109, 110–144, 145–179, 180–214, 215–241, 242–276, 278–312, 313–347, 350–376, 377–411, 412–446, 447–477, 479–513, 514–548, and 550–580; these read SVYL…MPLR, TAFS…LPQR, DSVS…GIEP, TQFT…GLRG, NVSV…DISS, WNAM…MAER, DIVT…SLLS, DRFT…GFDI, SGIV…DLKI, FTAL…LKDR, DVVA…GQRP, NSYT…GEIY, SVSV…IRCE, DTVS…GLRP, DHIT…DKII, and TLSH…MPIE. The interval 585 to 660 is type E motif; the sequence is TWGSLLSACR…EQGFSWIEVK (76 aa). Residues 661–691 are type E(+) motif; that stretch reads HKVHVFGVEDGTHPEKNEIYMTMKKIWDEIK. The interval 692 to 786 is type DYW motif; the sequence is KMGYVPDTAS…DGFCSCRDYW (95 aa).

Belongs to the PPR family. PCMP-H subfamily.

This is Pentatricopeptide repeat-containing protein At2g22070 (PCMP-H41) from Arabidopsis thaliana (Mouse-ear cress).